Reading from the N-terminus, the 389-residue chain is Sinapine esterase (389 aa).

Residues 1–25 form the signal peptide; the sequence is MASSLKKLITSFLLFFFYTIIVASS. Serine 41 functions as the Nucleophile in the catalytic mechanism. N-linked (GlcNAc...) asparagine glycosylation is found at asparagine 104, asparagine 137, and asparagine 320. Residues aspartate 345 and histidine 348 contribute to the active site. 2 N-linked (GlcNAc...) asparagine glycosylation sites follow: asparagine 372 and asparagine 383.

This sequence belongs to the 'GDSL' lipolytic enzyme family. As to expression, expressed in most tissues or organs of the mature seedlings. Not expressed in roots of mature seedlings.

It localises to the secreted. It carries out the reaction O-sinapoylcholine + H2O = (E)-sinapate + choline + H(+). Its activity is regulated as follows. Inhibited by PMSF. In terms of biological role, sinapine esterase that catalyzes that hydrolysis of sinapine, releasing choline and sinapate. Sinapine (O-sinapoylcholine) is the predominant phenolic compound in a complex group of sinapate esters in seeds of oilseed rape (B.napus). Sinapine has antinutritive activity and prevents the use of seed protein for food and feed. Shows broad substrate specificity towards various other choline esters, including phosphatidylcholine. This Brassica napus (Rape) protein is Sinapine esterase.